Reading from the N-terminus, the 508-residue chain is Pyruvate kinase, cytosolic isozyme (508 aa).

Substrate is bound at residue Arg48. K(+)-binding residues include Asn50, Ser52, Asp82, and Thr83. 50 to 53 (NFSH) is an ATP binding site. 2 residues coordinate ATP: Arg89 and Lys174. Glu240 provides a ligand contact to Mg(2+). Substrate contacts are provided by Gly263, Asp264, and Thr296. Asp264 lines the Mg(2+) pocket.

It belongs to the pyruvate kinase family. Homotetramer. The cofactor is Mg(2+). K(+) serves as cofactor.

The protein resides in the cytoplasm. The enzyme catalyses pyruvate + ATP = phosphoenolpyruvate + ADP + H(+). Its pathway is carbohydrate degradation; glycolysis; pyruvate from D-glyceraldehyde 3-phosphate: step 5/5. This is Pyruvate kinase, cytosolic isozyme from Nicotiana tabacum (Common tobacco).